We begin with the raw amino-acid sequence, 375 residues long: Growth/differentiation factor 8 (375 aa).

A signal peptide spans 1-18 (MQKLQISVYIYLFMLIVA). Positions 19-266 (GPVDLNEKSE…VTDTPKRSRR (248 aa)) are excised as a propeptide. N-linked (GlcNAc...) asparagine glycosylation is found at Asn47 and Asn71. 4 disulfide bridges follow: Cys272–Cys282, Cys281–Cys340, Cys309–Cys372, and Cys313–Cys374.

Belongs to the TGF-beta family. As to quaternary structure, homodimer; disulfide-linked. Interacts with WFIKKN2, leading to inhibit its activity. Interacts with FSTL3. Post-translationally, synthesized as large precursor molecule that undergoes proteolytic cleavage to generate an N-terminal propeptide and a disulfide linked C-terminal dimer, which is the biologically active molecule. The circulating form consists of a latent complex of the C-terminal dimer and other proteins, including its propeptide, which maintain the C-terminal dimer in a latent, inactive state. Ligand activation requires additional cleavage of the prodomain by a tolloid-like metalloproteinase.

The protein localises to the secreted. Acts specifically as a negative regulator of skeletal muscle growth. The sequence is that of Growth/differentiation factor 8 (MSTN) from Taurotragus derbianus (Giant eland).